We begin with the raw amino-acid sequence, 301 residues long: tRNA dimethylallyltransferase (301 aa).

8–15 is an ATP binding site; the sequence is GPTAVGKT. 10 to 15 is a substrate binding site; the sequence is TAVGKT. Residues 33 to 36 are interaction with substrate tRNA; it reads DSRQ.

It belongs to the IPP transferase family. In terms of assembly, monomer. Mg(2+) is required as a cofactor.

It carries out the reaction adenosine(37) in tRNA + dimethylallyl diphosphate = N(6)-dimethylallyladenosine(37) in tRNA + diphosphate. Functionally, catalyzes the transfer of a dimethylallyl group onto the adenine at position 37 in tRNAs that read codons beginning with uridine, leading to the formation of N6-(dimethylallyl)adenosine (i(6)A). This Thermosipho africanus (strain TCF52B) protein is tRNA dimethylallyltransferase.